A 474-amino-acid chain; its full sequence is Phenolic acid decarboxylase (474 aa).

Residues Asn161, His182, and Glu224 each coordinate Mn(2+). Prenylated FMN-binding positions include 161-166 and 181-182; these read NVGTYR and MH. The Proton donor role is filled by Glu273.

Belongs to the UbiD family. YclC subfamily. It depends on prenylated FMN as a cofactor. Mn(2+) is required as a cofactor.

It catalyses the reaction vanillate + H(+) = guaiacol + CO2. Its function is as follows. Involved in the non-oxidative decarboxylation and detoxification of phenolic derivatives under both aerobic and anaerobic conditions. Phenolic acid decarboxylase that catalyzes the reversible decarboxylation of vanillate. The polypeptide is Phenolic acid decarboxylase (Streptomyces sp. (strain D7)).